Consider the following 226-residue polypeptide: Fibrillarin-like rRNA/tRNA 2'-O-methyltransferase (226 aa).

S-adenosyl-L-methionine is bound by residues 85-86 (TT), 104-105 (EF), 129-130 (DA), and 149-152 (DVAQ).

This sequence belongs to the methyltransferase superfamily. Fibrillarin family. In terms of assembly, interacts with nop5. Component of box C/D small ribonucleoprotein (sRNP) particles that contain rpl7ae, FlpA and nop5, plus a guide RNA.

Functionally, involved in pre-rRNA and tRNA processing. Utilizes the methyl donor S-adenosyl-L-methionine to catalyze the site-specific 2'-hydroxyl methylation of ribose moieties in rRNA and tRNA. Site specificity is provided by a guide RNA that base pairs with the substrate. Methylation occurs at a characteristic distance from the sequence involved in base pairing with the guide RNA. The sequence is that of Fibrillarin-like rRNA/tRNA 2'-O-methyltransferase from Thermococcus onnurineus (strain NA1).